Consider the following 191-residue polypeptide: UPF0398 protein LSEI_1479 (191 aa).

Belongs to the UPF0398 family.

The protein is UPF0398 protein LSEI_1479 of Lacticaseibacillus paracasei (strain ATCC 334 / BCRC 17002 / CCUG 31169 / CIP 107868 / KCTC 3260 / NRRL B-441) (Lactobacillus paracasei).